The chain runs to 559 residues: METSKEFEFRPAKETSRSKSPGGIVGRLSNFARNKARHSLSEKGSNSVGGSGGAGFDKPRKDLLKEFHKCKEAQDQRLDLSSIEITSIPSPIKELTQLTELFLYKNKLTCLPTEIGQLVNLKKLGLSENALTSLPDSLASLESLETLDLRHNKLTEVPSVIYKIGSLETLWLRYNRIVAVDEQIGNLSKLKMLDVRENKIRELPSAIGKLTSLVVCLVSYNHLTRVPEEIGDCHSLTQLDLQHNDLSELPYSIGKLVNLVRIGIRYNKIRCIPSELESCQQLEEFIVESNHLQLLPPNLLTMLPKIHTVNLSRNELTAFPAGGPQQFVSTVTINMEHNQISKIPIGIFSKATRLTKLNLKENELVSLPLDMGSWTSITELNLSTNQLKVLPEDIEKLVNLEILVLSNNQLKKLPNQIGNLNKLRELDLEENELETVPTEIGFLQHLTKLWVQSNKILTLPRSIGNLCSLQDLRLGENNLTAIPEEIGHLDSLKSLYLNDNSSLHNLPFELALCQSLEIMSIENSPLSQIPPEITAGGPSLVIQYLKMQGPYRGVVMNSQ.

The span at 1–17 shows a compositional bias: basic and acidic residues; that stretch reads METSKEFEFRPAKETSR. The tract at residues 1 to 55 is disordered; the sequence is METSKEFEFRPAKETSRSKSPGGIVGRLSNFARNKARHSLSEKGSNSVGGSGGAG. LRR repeat units lie at residues 74-95, 97-118, 120-142, 143-164, 166-187, 189-210, 212-233, 235-256, 258-279, 281-302, 305-326, 329-350, 353-374, 376-397, 399-420, 422-443, 445-466, 468-489, 491-513, and 515-536; these read QDQRLDLSSIEITSIPSPIKEL, QLTELFLYKNKLTCLPTEIGQL, NLKKLGLSENALTSLPDSLASLE, SLETLDLRHNKLTEVPSVIYKI, SLETLWLRYNRIVAVDEQIGNL, KLKMLDVRENKIRELPSAIGKL, SLVVCLVSYNHLTRVPEEIGDC, SLTQLDLQHNDLSELPYSIGKL, NLVRIGIRYNKIRCIPSELESC, QLEEFIVESNHLQLLPPNLLTM, KIHTVNLSRNELTAFPAGGPQQ, STVTINMEHNQISKIPIGIFSK, RLTKLNLKENELVSLPLDMGSW, SITELNLSTNQLKVLPEDIEKL, NLEILVLSNNQLKKLPNQIGNL, KLRELDLEENELETVPTEIGFL, HLTKLWVQSNKILTLPRSIGNL, SLQDLRLGENNLTAIPEEIGHL, SLKSLYLNDNSSLHNLPFELALC, and SLEIMSIENSPLSQIPPEITAG.

It belongs to the SHOC2 family. In terms of assembly, interacts with let-60.

Acts as a Ras effector and participates in MAPK pathway activation. Probably acts as a scaffolding protein in a protein phosphatase complex that specifically dephosphorylates Raf kinase and stimulates Raf activity at specialized signaling complexes upon Ras activation. Required for vulval development. Involved in fluid homeostasis. Plays a role in nicotinic acetylcholine receptor (nAChR)-mediated sensitivity to nicotine. This is Leucine-rich repeat protein soc-2 (soc-2) from Caenorhabditis elegans.